We begin with the raw amino-acid sequence, 508 residues long: Photosystem II CP47 reaction center protein (508 aa).

The next 6 membrane-spanning stretches (helical) occupy residues 21 to 36 (AVHIMHTALVSGWAGS), 101 to 115 (IVFSGLCFLAAIWHW), 140 to 156 (GIHLFLSGAACFGFGAF), 203 to 218 (IAAGILGILAGLFHLS), 237 to 252 (VLSSSIAAVFFAAFIV), and 457 to 472 (TFALLFFFGHIWHGAR).

This sequence belongs to the PsbB/PsbC family. PsbB subfamily. As to quaternary structure, PSII is composed of 1 copy each of membrane proteins PsbA, PsbB, PsbC, PsbD, PsbE, PsbF, PsbH, PsbI, PsbJ, PsbK, PsbL, PsbM, PsbT, PsbX, PsbY, PsbZ, Psb30/Ycf12, at least 3 peripheral proteins of the oxygen-evolving complex and a large number of cofactors. It forms dimeric complexes. It depends on Binds multiple chlorophylls. PSII binds additional chlorophylls, carotenoids and specific lipids. as a cofactor.

It localises to the plastid. It is found in the chloroplast thylakoid membrane. Its function is as follows. One of the components of the core complex of photosystem II (PSII). It binds chlorophyll and helps catalyze the primary light-induced photochemical processes of PSII. PSII is a light-driven water:plastoquinone oxidoreductase, using light energy to abstract electrons from H(2)O, generating O(2) and a proton gradient subsequently used for ATP formation. The sequence is that of Photosystem II CP47 reaction center protein from Cryptomeria japonica (Japanese cedar).